The primary structure comprises 359 residues: Cytochrome c oxidase subunit 2 (359 aa).

The N-terminal stretch at 1-28 (MEQQNKRGLKRKALLGGVLGLGGLAMAG) is a signal peptide. The S-diacylglycerol cysteine moiety is linked to residue cysteine 29. The next 2 membrane-spanning stretches (helical) occupy residues 64–84 (VWVA…TAIF) and 107–127 (VPLE…LFFF). A disordered region spans residues 168-203 (PGGQDYQGSDPERQAAAEASKKDPSGDNPIHGNSKS). A compositionally biased stretch (basic and acidic residues) spans 177 to 192 (DPERQAAAEASKKDPS). 6 residues coordinate Cu cation: histidine 244, cysteine 285, glutamate 287, cysteine 289, histidine 293, and methionine 296. Residues 335-359 (YATSTSPFVSDRTATRDGENTQSNA) are disordered.

As to quaternary structure, associates with subunits I, III and IV to form cytochrome c oxidase. The 4 subunit cytochrome c oxidase forms a supercomplex with the menaquinol-cytochrome c reductase complex (cytochrome bc1). Requires binuclear copper center (CuA) as cofactor.

The protein localises to the cell membrane. It carries out the reaction 4 Fe(II)-[cytochrome c] + O2 + 8 H(+)(in) = 4 Fe(III)-[cytochrome c] + 2 H2O + 4 H(+)(out). Its function is as follows. Subunits I and II form the functional core of the enzyme complex. Electrons originating in cytochrome c are transferred via heme a and Cu(A) to the binuclear center formed by heme a3 and Cu(B). The polypeptide is Cytochrome c oxidase subunit 2 (ctaC) (Corynebacterium glutamicum (strain ATCC 13032 / DSM 20300 / JCM 1318 / BCRC 11384 / CCUG 27702 / LMG 3730 / NBRC 12168 / NCIMB 10025 / NRRL B-2784 / 534)).